The following is a 159-amino-acid chain: Small ribosomal subunit protein uS7 (159 aa).

Belongs to the universal ribosomal protein uS7 family. In terms of assembly, part of the 30S ribosomal subunit. Contacts proteins S9 and S11.

Functionally, one of the primary rRNA binding proteins, it binds directly to 16S rRNA where it nucleates assembly of the head domain of the 30S subunit. Is located at the subunit interface close to the decoding center, probably blocks exit of the E-site tRNA. The chain is Small ribosomal subunit protein uS7 from Sulfurihydrogenibium sp. (strain YO3AOP1).